Consider the following 457-residue polypeptide: Cystathionine beta-lyase (457 aa).

Residues 1-41 form a disordered region; it reads MSTPNSDSPAAQAAKKVFSRLDLDGHNLPPSPAPSSPHNGR.

The protein belongs to the trans-sulfuration enzymes family. Pyridoxal 5'-phosphate is required as a cofactor.

It is found in the cytoplasm. The protein localises to the nucleus. The catalysed reaction is L,L-cystathionine + H2O = L-homocysteine + pyruvate + NH4(+). The enzyme catalyses an S-substituted L-cysteine + H2O = a thiol + pyruvate + NH4(+). Its pathway is amino-acid biosynthesis; L-methionine biosynthesis via de novo pathway; L-homocysteine from L-cystathionine: step 1/1. Functionally, involved in de novo synthesis of methionine. The chain is Cystathionine beta-lyase (met-2) from Neurospora crassa (strain ATCC 24698 / 74-OR23-1A / CBS 708.71 / DSM 1257 / FGSC 987).